The following is a 327-amino-acid chain: Methionyl-tRNA formyltransferase (327 aa).

A (6S)-5,6,7,8-tetrahydrofolate-binding site is contributed by 121–124 (SLLP).

This sequence belongs to the Fmt family.

It carries out the reaction L-methionyl-tRNA(fMet) + (6R)-10-formyltetrahydrofolate = N-formyl-L-methionyl-tRNA(fMet) + (6S)-5,6,7,8-tetrahydrofolate + H(+). Its function is as follows. Attaches a formyl group to the free amino group of methionyl-tRNA(fMet). The formyl group appears to play a dual role in the initiator identity of N-formylmethionyl-tRNA by promoting its recognition by IF2 and preventing the misappropriation of this tRNA by the elongation apparatus. The protein is Methionyl-tRNA formyltransferase of Paraburkholderia phymatum (strain DSM 17167 / CIP 108236 / LMG 21445 / STM815) (Burkholderia phymatum).